The chain runs to 121 residues: CRISPR system Cms protein Csm2 (121 aa).

Belongs to the CRISPR-associated Csm2 family. As to quaternary structure, part of the Csm effector complex that includes at least Cas10(1), Csm2(3), Csm3(5), Csm4(1), Csm5(1) and mature crRNA. The Csm complex is elongated and slightly twisted with a maximal length of 215 Angstroms and a diameter of 75-80 Angstroms. It has been modeled to have a central protein filamant of Csm3 subunits along which the dsRNA helix of paired crRNA and target RNA binds. The filament is capped at one end by Cas10 and Csm4 and at the other end by Csm5; ssDNA is thought to bind to the N-terminal HD domain of Cas10. Csm with a precursor crRNA does not include Csm5, while Cas6, the enzyme probably involved in pre-crRNA processing, is found associated with a subset of the Csm complex.

In terms of biological role, CRISPR (clustered regularly interspaced short palindromic repeat) is an adaptive immune system that provides protection against mobile genetic elements (viruses, transposable elements and conjugative plasmids). CRISPR clusters contain spacers, sequences complementary to antecedent mobile elements, and target invading nucleic acids. CRISPR clusters are transcribed and processed into CRISPR RNA (crRNA). The type III-A Csm effector complex binds crRNA and acts as a crRNA-guided RNase, DNase and cyclic oligoadenylate synthase; binding of target RNA cognate to the crRNA is required for all activities. In a heterologous host this Csm effector complex restricts ssRNA phage MS2, suggesting it may target RNA viruses in vivo. Csm functions as a non-specific ssDNase. Base-pairing between crRNA and target RNA to form a ternary Csm complex activates a ssDNase activity; target RNA cleavage suppresses the ssDNase, a temporal control that prevents uncontrolled DNA degradation. Viral RNA transcripts probably tether the Csm complex to the viral genome, recruiting Cas10 ssDNA activity which is able to degrade DNA in the transcription bubble, spatially controlling the DNase activity. Its function is as follows. This subunit may be involved in monitoring complementarity of crRNA and target RNA. This is CRISPR system Cms protein Csm2 from Streptococcus thermophilus.